The chain runs to 269 residues: Glutamate racemase (269 aa).

Residues 7 to 8 and 39 to 40 contribute to the substrate site; these read DS and YG. Cys70 acts as the Proton donor/acceptor in catalysis. 71 to 72 lines the substrate pocket; the sequence is NT. Cys194 functions as the Proton donor/acceptor in the catalytic mechanism. 195–196 serves as a coordination point for substrate; that stretch reads TH.

The protein belongs to the aspartate/glutamate racemases family.

It carries out the reaction L-glutamate = D-glutamate. The protein operates within cell wall biogenesis; peptidoglycan biosynthesis. Provides the (R)-glutamate required for cell wall biosynthesis. This is Glutamate racemase from Roseobacter denitrificans (strain ATCC 33942 / OCh 114) (Erythrobacter sp. (strain OCh 114)).